The chain runs to 555 residues: MWREAMMELLDQLEAENPEDPALAPKDLSEWACIYIKYLQIMRKLETAYDQMVHPQKRQDMRKALEACIGRMLEIRHWMVKLNRGLDFINLDDILVDLKLGPEVLEVPVPKYFIEDRAKELDDRDKFLEALIEKYNVKGPAASPIIRIGAPLGEDEAILMIQKNERGRQARERARLAAITKRQRQIEDRRVRLGVTLSHEEAARKIQAAIRGFLWRRRIKKEADKELMFIGMKPKPRDPKRDPQMGEAKNLMRRKRVQLEHGREYDEAIVNLKGKVRELEGQDMRETIQDKVNAWFVEKRNPDTGEYPDFPDPDDGGSRAILNPPPPSLASLLEDAAGDGKGKGKDGKGDAKKDAKKDPKKDKKGGGDEPQAEEQKIGAVFIPAIEAAVQEFVAKWQDRDEADNFHQKYDAELVKDELRPIVFEEIRLQVDGEMRVLLQNLKDLVEAERAAKLGKKGKKKKGKKKEPFSRIKKELLKEAKTLAPGERVLVLGNSREPYLCAKKDEKDAAGDGKGKGKDGKGGGKPGTAGSKPGTADKKKKGGKKKSLCSDWSCGA.

IQ domains follow at residues 154 to 183 (EDEA…TKRQ) and 199 to 226 (HEEA…ADKE). 4 disordered regions span residues 232-255 (MKPK…MRRK), 299-377 (KRNP…EQKI), 450-469 (AAKL…EPFS), and 501-555 (AKKD…SCGA). 2 stretches are compositionally biased toward basic and acidic residues: residues 235–244 (KPRDPKRDPQ) and 338–367 (GDGK…KGGG). Residues 452 to 464 (KLGKKGKKKKGKK) are compositionally biased toward basic residues. Basic and acidic residues predominate over residues 501 to 521 (AKKDEKDAAGDGKGKGKDGKG). Residues 537–546 (KKKKGGKKKS) show a composition bias toward basic residues.

The protein belongs to the AAA ATPase family. DRC11 subfamily. As to quaternary structure, component of the nexin-dynein regulatory complex (N-DRC). Interacts with DRC5.

The protein localises to the cytoplasm. The protein resides in the cytoskeleton. It localises to the flagellum axoneme. Its function is as follows. Component of the nexin-dynein regulatory complex (N-DRC), a key regulator of ciliary/flagellar motility which maintains the alignment and integrity of the distal axoneme and regulates microtubule sliding in motile axonemes. The chain is Dynein regulatory complex protein 11 from Chlamydomonas reinhardtii (Chlamydomonas smithii).